Reading from the N-terminus, the 64-residue chain is Large ribosomal subunit protein bL28 (64 aa).

It belongs to the bacterial ribosomal protein bL28 family.

The chain is Large ribosomal subunit protein bL28 from Campylobacter jejuni subsp. doylei (strain ATCC BAA-1458 / RM4099 / 269.97).